We begin with the raw amino-acid sequence, 418 residues long: STAM-binding protein-like A (418 aa).

The disordered stretch occupies residues 199 to 218 (PDVHGPPQASLSPQTPPAGA). The region spanning 251–382 (LFVPAELCQR…LTDYGMDDVG (132 aa)) is the MPN domain. Zn(2+)-binding residues include histidine 329, histidine 331, aspartate 342, histidine 344, cysteine 384, histidine 390, and histidine 392. Positions 329–342 (HTHPTQTAFLSSVD) match the JAMM motif motif.

This sequence belongs to the peptidase M67C family. Zn(2+) serves as cofactor.

In terms of biological role, zinc metalloprotease that specifically cleaves 'Lys-63'-linked polyubiquitin chains. Does not cleave 'Lys-48'-linked polyubiquitin chains. Functions at the endosome and is able to oppose the ubiquitin-dependent sorting of receptors to lysosomes. This is STAM-binding protein-like A (stambpa) from Danio rerio (Zebrafish).